The sequence spans 459 residues: Putrescine aminotransferase (459 aa).

Pyridoxal 5'-phosphate is bound by residues 150–151 and Q274; that span reads GT. K300 bears the N6-(pyridoxal phosphate)lysine mark. T332 contacts pyridoxal 5'-phosphate.

It belongs to the class-III pyridoxal-phosphate-dependent aminotransferase family. Putrescine aminotransferase subfamily. The cofactor is pyridoxal 5'-phosphate.

It carries out the reaction an alkane-alpha,omega-diamine + 2-oxoglutarate = an omega-aminoaldehyde + L-glutamate. It catalyses the reaction putrescine + 2-oxoglutarate = 1-pyrroline + L-glutamate + H2O. The catalysed reaction is cadaverine + 2-oxoglutarate = 5-aminopentanal + L-glutamate. It participates in amine and polyamine degradation; putrescine degradation; 4-aminobutanal from putrescine (transaminase route): step 1/1. Catalyzes the aminotransferase reaction from putrescine to 2-oxoglutarate, leading to glutamate and 4-aminobutanal, which spontaneously cyclizes to form 1-pyrroline. This is the first step in one of two pathways for putrescine degradation, where putrescine is converted into 4-aminobutanoate (gamma-aminobutyrate or GABA) via 4-aminobutanal. Also functions as a cadaverine transaminase in a a L-lysine degradation pathway to succinate that proceeds via cadaverine, glutarate and L-2-hydroxyglutarate. The sequence is that of Putrescine aminotransferase from Klebsiella pneumoniae (strain 342).